The sequence spans 111 residues: Universal stress protein B (111 aa).

Helical transmembrane passes span 1–21 (MIST…NMAR) and 90–110 (FILT…LAIW).

This sequence belongs to the universal stress protein B family.

The protein resides in the cell inner membrane. The chain is Universal stress protein B from Erwinia tasmaniensis (strain DSM 17950 / CFBP 7177 / CIP 109463 / NCPPB 4357 / Et1/99).